Consider the following 70-residue polypeptide: Sec-independent protein translocase protein TatA (70 aa).

Residues 1–21 traverse the membrane as a helical segment; that stretch reads MGIGVWELLLLFLIVLVVFGT. Residues 42–70 are disordered; it reads MSENEDKPSEGGARTLEGEVVDKKEKDKV. The span at 57-70 shows a compositional bias: basic and acidic residues; that stretch reads LEGEVVDKKEKDKV.

It belongs to the TatA/E family. In terms of assembly, the Tat system comprises two distinct complexes: a TatABC complex, containing multiple copies of TatA, TatB and TatC subunits, and a separate TatA complex, containing only TatA subunits. Substrates initially bind to the TatABC complex, which probably triggers association of the separate TatA complex to form the active translocon.

It localises to the cell inner membrane. Its function is as follows. Part of the twin-arginine translocation (Tat) system that transports large folded proteins containing a characteristic twin-arginine motif in their signal peptide across membranes. TatA could form the protein-conducting channel of the Tat system. In Methylococcus capsulatus (strain ATCC 33009 / NCIMB 11132 / Bath), this protein is Sec-independent protein translocase protein TatA.